A 158-amino-acid polypeptide reads, in one-letter code: Transcription elongation factor GreA (158 aa).

Residues Ala45–Glu72 adopt a coiled-coil conformation.

It belongs to the GreA/GreB family.

Functionally, necessary for efficient RNA polymerase transcription elongation past template-encoded arresting sites. The arresting sites in DNA have the property of trapping a certain fraction of elongating RNA polymerases that pass through, resulting in locked ternary complexes. Cleavage of the nascent transcript by cleavage factors such as GreA or GreB allows the resumption of elongation from the new 3'terminus. GreA releases sequences of 2 to 3 nucleotides. The protein is Transcription elongation factor GreA of Xylella fastidiosa (strain 9a5c).